Reading from the N-terminus, the 81-residue chain is Acyl carrier protein (81 aa).

The Carrier domain maps to 2 to 80 (ASNEEILAGL…DAVSFIANAQ (79 aa)). Position 40 is an O-(pantetheine 4'-phosphoryl)serine (serine 40).

Belongs to the acyl carrier protein (ACP) family. Post-translationally, 4'-phosphopantetheine is transferred from CoA to a specific serine of apo-ACP by AcpS. This modification is essential for activity because fatty acids are bound in thioester linkage to the sulfhydryl of the prosthetic group.

It localises to the cytoplasm. It participates in lipid metabolism; fatty acid biosynthesis. Functionally, carrier of the growing fatty acid chain in fatty acid biosynthesis. The protein is Acyl carrier protein of Paenarthrobacter aurescens (strain TC1).